The primary structure comprises 243 residues: Protein VERNALIZATION 1 (243 aa).

An MADS-box domain is found at 1 to 61; sequence MGRGKVQLKR…GKLYEFATDS (61 aa). Positions 88-178 constitute a K-box domain; sequence QGNWCHEYRK…QKELVEKQKA (91 aa). The stretch at 122–178 forms a coiled coil; it reads LKELQQLEQQLESSLKHIRSRKNQLMHESISELQRKERSLQEENKALQKELVEKQKA. The tract at residues 173–243 is disordered; that stretch reads VEKQKAHTQQ…PPWMVSHISG (71 aa). A compositionally biased stretch (polar residues) spans 179–192; the sequence is HTQQAQWEQTHPQT.

The protein localises to the nucleus. Its function is as follows. Component of a grass-specific mechanism of vernalization, a process by which prolonged cold exposure provides competence to flower in daylengths longer than 12 hours. Involved in the exit of vernalization and confers flowering competency at the expense of freezing tolerance, probably by promoting the expression of VRN3; this process is essential in cv. Bd29-1 for flowering but seems do not occur in cv. Bd21. This chain is Protein VERNALIZATION 1, found in Brachypodium distachyon (Purple false brome).